The following is a 542-amino-acid chain: T-complex protein 1 subunit delta (542 aa).

Positions 1–16 (MPENVAPRTGPPAGAA) are enriched in low complexity. Positions 1 to 31 (MPENVAPRTGPPAGAAGAAGGRGKSAYQDRD) are disordered. Position 22 is an omega-N-methylarginine (arginine 22). Lysine 24 is subject to N6-acetyllysine. A Phosphoserine modification is found at serine 39. Glycine 56 is an ADP binding site. ATP is bound at residue glycine 56. Aspartate 107 serves as a coordination point for Mg(2+). Residues glycine 108, threonine 109, threonine 110, serine 111, asparagine 175, serine 176, and lysine 177 each contribute to the ADP site. Residues glycine 108 and threonine 109 each contribute to the ATP site. Lysine 177 is an ATP binding site. Phosphoserine is present on residues serine 187 and serine 205. An N6-acetyllysine mark is found at lysine 291, lysine 305, lysine 322, and lysine 329. Position 428 (glycine 428) interacts with ADP. Serine 447 is modified (phosphoserine). Position 513 (glutamine 513) interacts with ADP.

The protein belongs to the TCP-1 chaperonin family. Component of the chaperonin-containing T-complex (TRiC), a hexadecamer composed of two identical back-to-back stacked rings enclosing a protein folding chamber. Each ring is made up of eight different subunits: TCP1/CCT1, CCT2, CCT3, CCT4, CCT5, CCT6A/CCT6, CCT7, CCT8. Interacts with PACRG. Interacts with DNAAF4. Interacts with DLEC1.

The protein resides in the cytoplasm. It localises to the melanosome. It is found in the cytoskeleton. The protein localises to the microtubule organizing center. Its subcellular location is the centrosome. The protein resides in the cilium basal body. It catalyses the reaction ATP + H2O = ADP + phosphate + H(+). Functionally, component of the chaperonin-containing T-complex (TRiC), a molecular chaperone complex that assists the folding of actin, tubulin and other proteins upon ATP hydrolysis. The TRiC complex mediates the folding of WRAP53/TCAB1, thereby regulating telomere maintenance. As part of the TRiC complex may play a role in the assembly of BBSome, a complex involved in ciliogenesis regulating transports vesicles to the cilia. The protein is T-complex protein 1 subunit delta (CCT4) of Bos taurus (Bovine).